The chain runs to 463 residues: D(2)-like dopamine receptor (463 aa).

The Extracellular segment spans residues 1–35 (MDVFTQYAYNDSIFDNGTWSANETTKDETHPYNYY). 3 N-linked (GlcNAc...) asparagine glycosylation sites follow: Asn10, Asn16, and Asn22. A helical membrane pass occupies residues 36-58 (AMLLTLLIFVIVFGNVLVCMAVS). Topologically, residues 59–68 (REKALQTTTN) are cytoplasmic. Residues 69 to 91 (YLIVSLAVADLLVATLVMPWVVY) form a helical membrane-spanning segment. The Extracellular portion of the chain corresponds to 92–106 (LEVVGEWRFSKIHCD). Cys105 and Cys183 form a disulfide bridge. The chain crosses the membrane as a helical span at residues 107-128 (IFVTLDVMMCTASILNLCAISI). Over 129-149 (DRYTAVAMPMLYNTRYSSRRR) the chain is Cytoplasmic. Residues 150 to 170 (VTVMISVVWVLSFAISCPLLF) traverse the membrane as a helical segment. Topologically, residues 171 to 189 (GLNNTATRDQSLCFIANPA) are extracellular. A helical transmembrane segment spans residues 190–214 (FVVYSSIVSFYVPFIVTLLVYVQIY). Residues 215-392 (VVLRKRRKRV…SQQKEKKATQ (178 aa)) are Cytoplasmic-facing. The interval 295-362 (CGGSHKQPPP…KEAQGNPAPV (68 aa)) is disordered. Over residues 315-329 (PATSHQLLMSTKANA) the composition is skewed to polar residues. The segment covering 341–353 (EGQRTEKNGDPTK) has biased composition (basic and acidic residues). A helical membrane pass occupies residues 393 to 414 (MLAIVLGVFIICWLPFFITHIL). The Extracellular segment spans residues 415–429 (NTHCTRCKVPAEMYN). Residues Cys418 and Cys421 are joined by a disulfide bond. The chain crosses the membrane as a helical span at residues 430–451 (AFTWLGYVNSAVNPIIYTTFNV). Topologically, residues 452 to 463 (EFRKAFIKILHC) are cytoplasmic.

This sequence belongs to the G-protein coupled receptor 1 family.

Its subcellular location is the cell membrane. Its function is as follows. Receptor for dopamine. This Takifugu rubripes (Japanese pufferfish) protein is D(2)-like dopamine receptor (d215).